The chain runs to 1008 residues: PWWP domain-containing protein 3 (1008 aa).

Positions 78 to 122 form a coiled coil; it reads VSSLLKLKEDVEEEEEEEEEEEEEEEDGEDEEEEEEEEEEEEEEE. Positions 84 to 124 are disordered; sequence LKEDVEEEEEEEEEEEEEEEDGEDEEEEEEEEEEEEEEEHG. Over residues 87–122 the composition is skewed to acidic residues; the sequence is DVEEEEEEEEEEEEEEEDGEDEEEEEEEEEEEEEEE. The region spanning 127-188 is the PWWP domain; the sequence is VGDFVWGKIK…ASQLKPFAES (62 aa). Disordered regions lie at residues 307–339, 399–606, and 668–874; these read EYHEPQSVPGLEDKNNDDDDDDEEKNVNDGLQW, ETEP…LGQE, and NHKF…GPGS. Over residues 321-330 the composition is skewed to acidic residues; that stretch reads NNDDDDDDEE. Basic and acidic residues predominate over residues 399 to 409; sequence ETEPADGDVKS. Acidic residues predominate over residues 473 to 490; it reads DDGDDDGSGDKEESEEKE. 3 stretches are compositionally biased toward basic and acidic residues: residues 511–522, 677–687, and 707–725; these read RFDDSVVERSTE, SSDKEKEELSE, and QKAEEIEVTGKEENETDKH. Basic residues predominate over residues 726–738; the sequence is GKMKKERKRKKSE. Composition is skewed to basic and acidic residues over residues 739–758, 768–787, and 794–818; these read SKKEGGEGEETQKEANESTK, SKKQSDGEEETQKEPSESTK, and NPESKKKAEAVEEEETRKESVESTK. Short sequence motifs (nuclear localization signal) lie at residues 786 to 793, 809 to 816, and 841 to 848; these read TKKERKRK, TRKESVES, and EKKKKKKR. Residues 804–824 are a coiled coil; that stretch reads VEEEETRKESVESTKKERKRK. Positions 842–854 are enriched in basic residues; sequence KKKKKKREGKSKK.

The protein belongs to the PDP family. Interacts with DEK3. Binds to LHP1, MSI4/FVE and MSI5. Component of the PRC2 (polycomb repressive complex 2) complex which regulates histone methylation on histone H3K27.

It localises to the nucleus. Together with PDP1, PDP2 and PDP6, interacts with MSI4/FVE and MSI5 to suppress FLC, MAF4 and MAF5 expression by regulating the function of the PRC2 complex and modulating H3K27me3 level, thereby promoting flowering. This is PWWP domain-containing protein 3 from Arabidopsis thaliana (Mouse-ear cress).